The primary structure comprises 2037 residues: Protein SWOLLEN 1 (2037 aa).

Disordered regions lie at residues 141 to 179 (VEPGQTSHERSLSKEETVNLQPNPSVDDTPGESSVVKTD), 454 to 487 (REGGVSKKSDNEGSARTSNLEQSMELPVNANDRD), 504 to 531 (SVGYVSGGSTSELAESESQSDSIPTDKS), 567 to 637 (KTSS…KDAV), 686 to 705 (SLPILGSEAGKDGQEEDNTA), 837 to 893 (VGSP…SGGK), 1011 to 1045 (ATPETPLQSRPGKTETPSAGHTNSKESSGTNPMIP), 1148 to 1197 (KHVQ…ESGP), 1729 to 1748 (SGETISSSHEGDTPKEKRPR), 1793 to 1812 (KSTREENKPDPLRMKRTGLQ), and 1841 to 2037 (EAST…QSKK). Over residues 147–157 (SHERSLSKEET) the composition is skewed to basic and acidic residues. Residues 158-176 (VNLQPNPSVDDTPGESSVV) are compositionally biased toward polar residues. Residues 454–466 (REGGVSKKSDNEG) are compositionally biased toward basic and acidic residues. The span at 504-514 (SVGYVSGGSTS) shows a compositional bias: low complexity. Residues 515 to 526 (ELAESESQSDSI) show a composition bias toward polar residues. Over residues 841–852 (STSSLDKTAAKS) the composition is skewed to low complexity. Basic residues predominate over residues 853–865 (SKAKSERKPRRTS). Polar residues-rich tracts occupy residues 1025 to 1041 (ETPSAGHTNSKESSGTN) and 1151 to 1171 (QSGTSSNVSKVTPTLEPTSTV). A compositionally biased stretch (basic residues) spans 1179 to 1189 (TRVKSRKRKKM). Over residues 1794-1805 (STREENKPDPLR) the composition is skewed to basic and acidic residues. 3 stretches are compositionally biased toward polar residues: residues 1874–1886 (KTISIEKQTTISR), 1942–1964 (EEQTTSSSHDTGSKNSSSLSTNK), and 2013–2023 (LQTSMMTSKIP). Over residues 2028-2037 (SKSHLSQSKK) the composition is skewed to basic residues.

Interacts with importin alpha IMPA1 and IMPA2, required for nuclear-localized proteins import. In terms of tissue distribution, mainly expressed in seedlings, flower buds and stems, and, to a lower extent, in leaves and siliques.

Its subcellular location is the nucleus. Under salt stress, appears to prevent the accumulation of reactive oxygen species (ROS) in roots and required for the maintenance of cell wall integrity (cellulose, pectin and lignin composition) by interacting with importin alpha (e.g. IMPA1 and IMPA2) and binding to the promoter of several ROS- and cell wall-related genes to regulate their expression. Necessary for cells organization in meristems and root elongation zones as well as for root elongation in high salinity, but not upon osmotic stress. This is Protein SWOLLEN 1 from Arabidopsis thaliana (Mouse-ear cress).